The sequence spans 411 residues: Peptidase T (411 aa).

Histidine 79 is a Zn(2+) binding site. The active site involves aspartate 81. Aspartate 142 provides a ligand contact to Zn(2+). Catalysis depends on glutamate 176, which acts as the Proton acceptor. Zn(2+)-binding residues include glutamate 177, aspartate 199, and histidine 381.

Belongs to the peptidase M20B family. Zn(2+) serves as cofactor.

It is found in the cytoplasm. The enzyme catalyses Release of the N-terminal residue from a tripeptide.. In terms of biological role, cleaves the N-terminal amino acid of tripeptides. This chain is Peptidase T, found in Geobacillus thermodenitrificans (strain NG80-2).